A 457-amino-acid polypeptide reads, in one-letter code: ATP-dependent protease ATPase subunit HslU (457 aa).

ATP contacts are provided by residues Val-21, 63–68, Asp-269, Glu-335, and Arg-407; that span reads GVGKTE.

Belongs to the ClpX chaperone family. HslU subfamily. As to quaternary structure, a double ring-shaped homohexamer of HslV is capped on each side by a ring-shaped HslU homohexamer. The assembly of the HslU/HslV complex is dependent on binding of ATP.

The protein resides in the cytoplasm. ATPase subunit of a proteasome-like degradation complex; this subunit has chaperone activity. The binding of ATP and its subsequent hydrolysis by HslU are essential for unfolding of protein substrates subsequently hydrolyzed by HslV. HslU recognizes the N-terminal part of its protein substrates and unfolds these before they are guided to HslV for hydrolysis. The polypeptide is ATP-dependent protease ATPase subunit HslU (Desulfotalea psychrophila (strain LSv54 / DSM 12343)).